Consider the following 395-residue polypeptide: General transcription factor IIH subunit 2 (395 aa).

A VWFA domain is found at 60-236; that stretch reads HLYVVVDGSR…HYKELLTHHV (177 aa). The residue at position 95 (Tyr95) is a Phosphotyrosine. The segment at 291 to 308 adopts a C4-type zinc-finger fold; that stretch reads CPQCRAKYCELPVECKIC.

The protein belongs to the GTF2H2 family. As to quaternary structure, component of the TFIID-containing RNA polymerase II pre-initiation complex that is composed of TBP and at least GTF2A1, GTF2A2, GTF2E1, GTF2E2, GTF2F1, GTF2H2, GTF2H3, GTF2H4, GTF2H5, GTF2B, TCEA1, ERCC2 and ERCC3. Component of the 7-subunit TFIIH core complex composed of XPB/ERCC3, XPD/ERCC2, GTF2H1, GTF2H2, GTF2H3, GTF2H4 and GTF2H5, which is active in NER. The core complex associates with the 3-subunit CDK-activating kinase (CAK) module composed of CCNH/cyclin H, CDK7 and MNAT1 to form the 10-subunit holoenzyme (holo-TFIIH) active in transcription. Interacts with XPB, XPD, GTF2H1 and GTF2H3. (Microbial infection) Interacts with varicella-zoster virus IE63 protein. As to expression, widely expressed, with higher expression in skeletal muscle.

It is found in the nucleus. Component of the general transcription and DNA repair factor IIH (TFIIH) core complex, which is involved in general and transcription-coupled nucleotide excision repair (NER) of damaged DNA and, when complexed to CAK, in RNA transcription by RNA polymerase II. In NER, TFIIH acts by opening DNA around the lesion to allow the excision of the damaged oligonucleotide and its replacement by a new DNA fragment. In transcription, TFIIH has an essential role in transcription initiation. When the pre-initiation complex (PIC) has been established, TFIIH is required for promoter opening and promoter escape. Phosphorylation of the C-terminal tail (CTD) of the largest subunit of RNA polymerase II by the kinase module CAK controls the initiation of transcription. The N-terminus of GTF2H2 interacts with and regulates XPD whereas an intact C-terminus is required for a successful escape of RNAP II form the promoter. This is General transcription factor IIH subunit 2 (GTF2H2) from Homo sapiens (Human).